The primary structure comprises 222 residues: Protein DEHYDRATION-INDUCED 19 homolog 6 (222 aa).

Ser116 bears the Phosphoserine mark.

Belongs to the Di19 family. In terms of processing, phosphorylated in vitro by CPK3 or CPK11. As to expression, expressed in seedlings, roots, leaves, stems, flowers and siliques.

It localises to the nucleus. This chain is Protein DEHYDRATION-INDUCED 19 homolog 6 (DI19-6), found in Arabidopsis thaliana (Mouse-ear cress).